The following is a 411-amino-acid chain: Peptide chain release factor subunit 1 (411 aa).

Belongs to the eukaryotic release factor 1 family. In terms of assembly, heterodimer of two subunits, one of which binds GTP.

It localises to the cytoplasm. Functionally, directs the termination of nascent peptide synthesis (translation) in response to the termination codons UAA, UAG and UGA. This chain is Peptide chain release factor subunit 1, found in Methanosphaera stadtmanae (strain ATCC 43021 / DSM 3091 / JCM 11832 / MCB-3).